The primary structure comprises 196 residues: Peptidyl-tRNA hydrolase (196 aa).

Tyrosine 19 serves as a coordination point for tRNA. Histidine 24 functions as the Proton acceptor in the catalytic mechanism. Positions 68, 70, and 116 each coordinate tRNA.

Belongs to the PTH family. As to quaternary structure, monomer.

Its subcellular location is the cytoplasm. It catalyses the reaction an N-acyl-L-alpha-aminoacyl-tRNA + H2O = an N-acyl-L-amino acid + a tRNA + H(+). Its function is as follows. Hydrolyzes ribosome-free peptidyl-tRNAs (with 1 or more amino acids incorporated), which drop off the ribosome during protein synthesis, or as a result of ribosome stalling. In terms of biological role, catalyzes the release of premature peptidyl moieties from peptidyl-tRNA molecules trapped in stalled 50S ribosomal subunits, and thus maintains levels of free tRNAs and 50S ribosomes. In Aromatoleum aromaticum (strain DSM 19018 / LMG 30748 / EbN1) (Azoarcus sp. (strain EbN1)), this protein is Peptidyl-tRNA hydrolase.